Here is a 102-residue protein sequence, read N- to C-terminus: Urease subunit beta (102 aa).

Belongs to the urease beta subunit family. As to quaternary structure, heterotrimer of UreA (gamma), UreB (beta) and UreC (alpha) subunits. Three heterotrimers associate to form the active enzyme.

Its subcellular location is the cytoplasm. The catalysed reaction is urea + 2 H2O + H(+) = hydrogencarbonate + 2 NH4(+). Its pathway is nitrogen metabolism; urea degradation; CO(2) and NH(3) from urea (urease route): step 1/1. The polypeptide is Urease subunit beta (Pseudomonas syringae pv. tomato (strain ATCC BAA-871 / DC3000)).